The sequence spans 216 residues: 3-isopropylmalate dehydratase small subunit (216 aa).

Belongs to the LeuD family. LeuD type 1 subfamily. As to quaternary structure, heterodimer of LeuC and LeuD.

The catalysed reaction is (2R,3S)-3-isopropylmalate = (2S)-2-isopropylmalate. The protein operates within amino-acid biosynthesis; L-leucine biosynthesis; L-leucine from 3-methyl-2-oxobutanoate: step 2/4. Functionally, catalyzes the isomerization between 2-isopropylmalate and 3-isopropylmalate, via the formation of 2-isopropylmaleate. The sequence is that of 3-isopropylmalate dehydratase small subunit from Polaromonas naphthalenivorans (strain CJ2).